Consider the following 163-residue polypeptide: NADH-quinone oxidoreductase subunit I 1 (163 aa).

4Fe-4S ferredoxin-type domains lie at 53-83 (LRRY…IEAG) and 94-123 (VRYD…EGPN). The [4Fe-4S] cluster site is built by Cys-63, Cys-66, Cys-69, Cys-73, Cys-103, Cys-106, Cys-109, and Cys-113.

The protein belongs to the complex I 23 kDa subunit family. As to quaternary structure, NDH-1 is composed of 14 different subunits. Subunits NuoA, H, J, K, L, M, N constitute the membrane sector of the complex. It depends on [4Fe-4S] cluster as a cofactor.

The protein resides in the cell inner membrane. The enzyme catalyses a quinone + NADH + 5 H(+)(in) = a quinol + NAD(+) + 4 H(+)(out). Functionally, NDH-1 shuttles electrons from NADH, via FMN and iron-sulfur (Fe-S) centers, to quinones in the respiratory chain. The immediate electron acceptor for the enzyme in this species is believed to be ubiquinone. Couples the redox reaction to proton translocation (for every two electrons transferred, four hydrogen ions are translocated across the cytoplasmic membrane), and thus conserves the redox energy in a proton gradient. This is NADH-quinone oxidoreductase subunit I 1 from Rhizobium etli (strain ATCC 51251 / DSM 11541 / JCM 21823 / NBRC 15573 / CFN 42).